We begin with the raw amino-acid sequence, 310 residues long: MAGAAPTTAFGQAVIGPPGSGKTTYCLGMSEFLRALGRRVAVVNLDPANEGLPYECAVDVGELVGLGDVMDALRLGPNGGLLYCMEYLEANLDWLRAKLEPLRGHYFLFDCPGQVELCTHHTSLRSIFSQMAQWDLRLTAVHLVDSHYCTDPAKFISVLCTSLATMLHVELPHVNLLSKMDLIEHYGKLAFNLDYYTEVLDLSYLLDHLASDPFFSHYRQLNEKLVQLIEDYSLVSFIPLNIQDKDSIQRVLQAVDKANGYCFGVQEQRSLEALMSAAVGADFHFSSTLGIQEKYLASSDQTAEQEAMQL.

Ala2 carries the N-acetylalanine modification. Gly19–Thr24 serves as a coordination point for GTP. The Gly-Pro-Asn (GPN)-loop; involved in dimer interface motif lies at Gly76–Asn78. Ser178–Asp181 lines the GTP pocket.

The protein belongs to the GPN-loop GTPase family. Heterodimers with GPN1 or GPN3. Binds to RNA polymerase II (RNAPII).

In terms of biological role, small GTPase required for proper localization of RNA polymerase II and III (RNAPII and RNAPIII). May act at an RNAP assembly step prior to nuclear import. The chain is GPN-loop GTPase 2 from Rattus norvegicus (Rat).